Reading from the N-terminus, the 195-residue chain is 22.0 kDa heat shock protein (195 aa).

Positions 1–21 (MMKHLLSIFFIGALLLGNIKT) are cleaved as a signal peptide. Residues 62–180 (RDTSVALSPA…GPRVVNIAAE (119 aa)) form the sHSP domain. N-linked (GlcNAc...) asparagine glycosylation occurs at N160.

It belongs to the small heat shock protein (HSP20) family. In terms of assembly, may form oligomeric structures.

The protein resides in the endoplasmic reticulum. In Arabidopsis thaliana (Mouse-ear cress), this protein is 22.0 kDa heat shock protein (HSP22.0).